A 131-amino-acid polypeptide reads, in one-letter code: Arsenate reductase 2 (131 aa).

Catalysis depends on nucleophile residues Cys-10, Cys-82, and Cys-89. 2 disulfides stabilise this stretch: Cys-10–Cys-82 and Cys-82–Cys-89.

The protein belongs to the low molecular weight phosphotyrosine protein phosphatase family. Thioredoxin-coupled ArsC subfamily.

It localises to the cytoplasm. The catalysed reaction is arsenate + [thioredoxin]-dithiol + H(+) = arsenite + [thioredoxin]-disulfide + H2O. Catalyzes the reduction of arsenate [As(V)] to arsenite [As(III)]. The chain is Arsenate reductase 2 from Staphylococcus haemolyticus (strain JCSC1435).